The chain runs to 235 residues: Purine nucleoside phosphorylase DeoD-type (235 aa).

Position 4 (His-4) interacts with a purine D-ribonucleoside. Phosphate is bound by residues Gly-20, Arg-24, Arg-43, and 87 to 90; that span reads RVGT. Residues 179–181 and 203–204 contribute to the a purine D-ribonucleoside site; these read EME and SD. Asp-204 serves as the catalytic Proton donor.

Belongs to the PNP/UDP phosphorylase family. As to quaternary structure, homohexamer; trimer of homodimers.

It carries out the reaction a purine D-ribonucleoside + phosphate = a purine nucleobase + alpha-D-ribose 1-phosphate. The enzyme catalyses a purine 2'-deoxy-D-ribonucleoside + phosphate = a purine nucleobase + 2-deoxy-alpha-D-ribose 1-phosphate. Its function is as follows. Catalyzes the reversible phosphorolytic breakdown of the N-glycosidic bond in the beta-(deoxy)ribonucleoside molecules, with the formation of the corresponding free purine bases and pentose-1-phosphate. The polypeptide is Purine nucleoside phosphorylase DeoD-type (Brevibacillus brevis (strain 47 / JCM 6285 / NBRC 100599)).